The primary structure comprises 154 residues: Superoxide dismutase [Cu-Zn] (154 aa).

Positions 47, 49, and 64 each coordinate Cu cation. Cysteine 58 and cysteine 147 are disulfide-bonded. Zn(2+) is bound by residues histidine 64, histidine 72, histidine 81, and aspartate 84. Cu cation is bound at residue histidine 121. A compositionally biased stretch (basic and acidic residues) spans 125-136; it reads DDLGKGGNEESL. The tract at residues 125–144 is disordered; the sequence is DDLGKGGNEESLKTGNAGPR. Arginine 144 contributes to the substrate binding site.

The protein belongs to the Cu-Zn superoxide dismutase family. In terms of assembly, homodimer. Cu cation is required as a cofactor. It depends on Zn(2+) as a cofactor.

It localises to the cytoplasm. The catalysed reaction is 2 superoxide + 2 H(+) = H2O2 + O2. In terms of biological role, destroys radicals which are normally produced within the cells and which are toxic to biological systems. The protein is Superoxide dismutase [Cu-Zn] (sod-1) of Neurospora crassa (strain ATCC 24698 / 74-OR23-1A / CBS 708.71 / DSM 1257 / FGSC 987).